Consider the following 156-residue polypeptide: 6,7-dimethyl-8-ribityllumazine synthase (156 aa).

Residues F22, 57-59 (AYE), and 81-83 (SVI) each bind 5-amino-6-(D-ribitylamino)uracil. 86–87 (GT) is a binding site for (2S)-2-hydroxy-3-oxobutyl phosphate. Catalysis depends on H89, which acts as the Proton donor. F114 contributes to the 5-amino-6-(D-ribitylamino)uracil binding site. Residue R128 coordinates (2S)-2-hydroxy-3-oxobutyl phosphate.

It belongs to the DMRL synthase family. As to quaternary structure, forms an icosahedral capsid composed of 60 subunits, arranged as a dodecamer of pentamers.

It carries out the reaction (2S)-2-hydroxy-3-oxobutyl phosphate + 5-amino-6-(D-ribitylamino)uracil = 6,7-dimethyl-8-(1-D-ribityl)lumazine + phosphate + 2 H2O + H(+). It participates in cofactor biosynthesis; riboflavin biosynthesis; riboflavin from 2-hydroxy-3-oxobutyl phosphate and 5-amino-6-(D-ribitylamino)uracil: step 1/2. Catalyzes the formation of 6,7-dimethyl-8-ribityllumazine by condensation of 5-amino-6-(D-ribitylamino)uracil with 3,4-dihydroxy-2-butanone 4-phosphate. This is the penultimate step in the biosynthesis of riboflavin. In Photobacterium profundum (strain SS9), this protein is 6,7-dimethyl-8-ribityllumazine synthase.